A 418-amino-acid polypeptide reads, in one-letter code: Tyrosine--tRNA ligase (418 aa).

Tyrosine 38 is a binding site for L-tyrosine. The short motif at 43-52 (CTARSLHIGS) is the 'HIGH' region element. L-tyrosine-binding residues include tyrosine 175 and glutamine 179. A 'KMSKS' region motif is present at residues 235-239 (KMGKT). Position 238 (lysine 238) interacts with ATP. Residues 348 to 413 (LSVVKLLQVS…CGKKRHLKVV (66 aa)) enclose the S4 RNA-binding domain.

This sequence belongs to the class-I aminoacyl-tRNA synthetase family. TyrS type 1 subfamily. In terms of assembly, homodimer.

It is found in the cytoplasm. The catalysed reaction is tRNA(Tyr) + L-tyrosine + ATP = L-tyrosyl-tRNA(Tyr) + AMP + diphosphate + H(+). Its function is as follows. Catalyzes the attachment of tyrosine to tRNA(Tyr) in a two-step reaction: tyrosine is first activated by ATP to form Tyr-AMP and then transferred to the acceptor end of tRNA(Tyr). This chain is Tyrosine--tRNA ligase, found in Ehrlichia ruminantium (strain Gardel).